Reading from the N-terminus, the 117-residue chain is Large ribosomal subunit protein bL20 (117 aa).

The protein belongs to the bacterial ribosomal protein bL20 family.

Functionally, binds directly to 23S ribosomal RNA and is necessary for the in vitro assembly process of the 50S ribosomal subunit. It is not involved in the protein synthesizing functions of that subunit. The protein is Large ribosomal subunit protein bL20 of Nitratidesulfovibrio vulgaris (strain DSM 19637 / Miyazaki F) (Desulfovibrio vulgaris).